The chain runs to 1239 residues: Zinc finger and BTB domain-containing protein 40 (1239 aa).

Residues cysteine 24–lysine 87 enclose the BTB domain. Disordered stretches follow at residues serine 130–glutamate 231, histidine 687–alanine 732, and lysine 779–lysine 801. Over residues threonine 136–glutamine 145 the composition is skewed to basic and acidic residues. A compositionally biased stretch (polar residues) spans serine 181–asparagine 199. Residue serine 190 is modified to Phosphoserine. Positions alanine 200–alanine 212 are enriched in low complexity. Residues histidine 687 to serine 703 show a composition bias toward basic and acidic residues. At serine 703 the chain carries Phosphoserine. Polar residues predominate over residues proline 705 to glycine 719. C2H2-type zinc fingers lie at residues valine 807–histidine 830, phenylalanine 836–histidine 858, phenylalanine 864–histidine 887, tyrosine 893–histidine 915, tyrosine 921–histidine 944, tyrosine 950–histidine 973, histidine 978–histidine 1000, phenylalanine 1006–histidine 1029, leucine 1046–histidine 1069, and histidine 1075–histidine 1098. Residue lysine 1066 forms a Glycyl lysine isopeptide (Lys-Gly) (interchain with G-Cter in SUMO2) linkage. The C2H2-type 11; atypical zinc finger occupies phenylalanine 1104–histidine 1127. The C2H2-type 12 zinc finger occupies phenylalanine 1135–histidine 1158.

This sequence belongs to the krueppel C2H2-type zinc-finger protein family.

The protein localises to the nucleus. In terms of biological role, may be involved in transcriptional regulation. The sequence is that of Zinc finger and BTB domain-containing protein 40 (ZBTB40) from Homo sapiens (Human).